Reading from the N-terminus, the 237-residue chain is Uridylate kinase (237 aa).

Position 9–12 (Lys9–Gly12) interacts with ATP. The tract at residues Gly17–Gly22 is involved in allosteric activation by GTP. Gly51 contributes to the UMP binding site. Positions 52 and 56 each coordinate ATP. UMP contacts are provided by residues Asp71 and Cys132–Thr139. 3 residues coordinate ATP: Thr159, Tyr165, and Asp168.

The protein belongs to the UMP kinase family. Homohexamer.

It is found in the cytoplasm. The catalysed reaction is UMP + ATP = UDP + ADP. The protein operates within pyrimidine metabolism; CTP biosynthesis via de novo pathway; UDP from UMP (UMPK route): step 1/1. Its activity is regulated as follows. Allosterically activated by GTP. Inhibited by UTP. Functionally, catalyzes the reversible phosphorylation of UMP to UDP. The chain is Uridylate kinase from Parasynechococcus marenigrum (strain WH8102).